A 405-amino-acid chain; its full sequence is Dynactin subunit 2 (405 aa).

Residues 1-25 form a disordered region; the sequence is MADPKYADLPGIARNEPDVYETSDL. Alanine 2 is modified (N-acetylalanine). Tyrosine 6 is subject to Phosphotyrosine. Serine 85 is subject to Phosphoserine. Tyrosine 88 carries the phosphotyrosine modification. The stretch at 105–132 forms a coiled coil; that stretch reads YQRLLHEVQELTTEVEKIKMTVKESATE. Threonine 136 is subject to Phosphothreonine. Positions 187–207 are disordered; it reads KNTKGAGSGGKTTSGSPPDSS. Serine 324 is subject to Phosphoserine.

It belongs to the dynactin subunit 2 family. In terms of assembly, subunit of dynactin, a multiprotein complex part of a tripartite complex with dynein and a adapter, such as BICDL1, BICD2 or HOOK3. The dynactin complex is built around ACTR1A/ACTB filament and consists of an actin-related filament composed of a shoulder domain, a pointed end and a barbed end. Its length is defined by its flexible shoulder domain. The soulder is composed of 2 DCTN1 subunits, 4 DCTN2 and 2 DCTN3. The 4 DCNT2 (via N-terminus) bind the ACTR1A filament and act as molecular rulers to determine the length. The pointed end is important for binding dynein-dynactin cargo adapters and consists of 4 subunits: ACTR10, DCNT4, DCTN5 and DCTN6. The barbed end is composed of a CAPZA1:CAPZB heterodimers, which binds ACTR1A/ACTB filament and dynactin and stabilizes dynactin. Interacts with BICD2 and CEP135. Interacts with DYNAP. Interacts with ECPAS. Interacts with MAPRE1.

Its subcellular location is the cytoplasm. It is found in the cytoskeleton. It localises to the microtubule organizing center. The protein resides in the centrosome. The protein localises to the membrane. Functionally, part of the dynactin complex that activates the molecular motor dynein for ultra-processive transport along microtubules. In the dynactin soulder domain, binds the ACTR1A filament and acts as a molecular ruler to determine the length. Modulates cytoplasmic dynein binding to an organelle, and plays a role in prometaphase chromosome alignment and spindle organization during mitosis. Involved in anchoring microtubules to centrosomes. May play a role in synapse formation during brain development. The sequence is that of Dynactin subunit 2 (DCTN2) from Sus scrofa (Pig).